The chain runs to 346 residues: Uroporphyrinogen decarboxylase (346 aa).

Substrate is bound by residues 23-27 (RQAGR), D73, Y151, S206, and H321.

Belongs to the uroporphyrinogen decarboxylase family. In terms of assembly, homodimer.

The protein resides in the cytoplasm. The enzyme catalyses uroporphyrinogen III + 4 H(+) = coproporphyrinogen III + 4 CO2. It functions in the pathway porphyrin-containing compound metabolism; protoporphyrin-IX biosynthesis; coproporphyrinogen-III from 5-aminolevulinate: step 4/4. Functionally, catalyzes the decarboxylation of four acetate groups of uroporphyrinogen-III to yield coproporphyrinogen-III. The protein is Uroporphyrinogen decarboxylase of Aliarcobacter butzleri (strain RM4018) (Arcobacter butzleri).